Here is a 201-residue protein sequence, read N- to C-terminus: Casparian strip membrane protein 2 (201 aa).

Topologically, residues 1 to 38 are cytoplasmic; that stretch reads MKSTGEATAINIGETKSASATTVATTKAIQHPKAGLKR. The helical transmembrane segment at 39-59 threads the bilayer; that stretch reads GLAIFDFILRLSAIGAALAAT. The Extracellular portion of the chain corresponds to 60-89; that stretch reads TTMGTTDQTLPFFTQFFQFQASYDDLPAFS. Residues 90–110 form a helical membrane-spanning segment; the sequence is FFVIANAIASGYLFLSLPFSI. Over 111–129 the chain is Cytoplasmic; that stretch reads VCIVRPHAMGARLLLVICD. Residues 130-150 traverse the membrane as a helical segment; the sequence is TVMVALTIAAAAAAAAIVYLA. Topologically, residues 151–175 are extracellular; the sequence is HNGNSNANWVAICQQFDDFCQSVSG. Residues 176–196 traverse the membrane as a helical segment; it reads AVVASFIAAVLFMLMIVLSAF. At 197–201 the chain is on the cytoplasmic side; the sequence is SLRKH.

The protein belongs to the Casparian strip membrane proteins (CASP) family. As to quaternary structure, homodimer and heterodimers.

Its subcellular location is the cell membrane. Regulates membrane-cell wall junctions and localized cell wall deposition. Required for establishment of the Casparian strip membrane domain (CSD) and the subsequent formation of Casparian strips, a cell wall modification of the root endodermis that determines an apoplastic barrier between the intraorganismal apoplasm and the extraorganismal apoplasm and prevents lateral diffusion. The protein is Casparian strip membrane protein 2 of Vitis vinifera (Grape).